Consider the following 328-residue polypeptide: MTVPIAIIGTGIAGLSAAQALTAAGHQVHLFDKSRGSGGRMSSKRSDAGALDMGAQYFTARDRRFATAVKQWQAQGHVAEWTPLLYNFHAGRLSPSPDEQVRWVGKPGMSAITRAMRGDMPVSFSCRITEVFRGEEHWNLLDAEGQNHGPFSHVIIATPAPQASTLLAAAPKLASVVAGVKMDPTWAVALAFETPLQTPMQGCFVQDSPLDWLARNRSKPERDDTLDTWILHATSQWSRQNLDASREQVIEHLHGAFAELIDCTMPAPVFSLAHRWLYARPAGAHEWGALSDADLGIYVCGDWCLSGRVEGAWLSGQEAARRLLEHLQ.

Residues alanine 13, 32–33 (DK), arginine 40, and 56–57 (QY) contribute to the FAD site. Substrate-binding positions include 57–61 (YFTAR) and 96–98 (SPD). Isoleucine 128 contacts FAD. Threonine 185 lines the substrate pocket. FAD is bound at residue aspartate 302. Arginine 308 is a substrate binding site. An FAD-binding site is contributed by valine 309.

This sequence belongs to the bacterial renalase family. Requires FAD as cofactor.

The enzyme catalyses 1,2-dihydro-beta-NAD + O2 + H(+) = H2O2 + NAD(+). It carries out the reaction 1,2-dihydro-beta-NADP + O2 + H(+) = H2O2 + NADP(+). The catalysed reaction is 1,6-dihydro-beta-NADP + O2 + H(+) = H2O2 + NADP(+). It catalyses the reaction 1,6-dihydro-beta-NAD + O2 + H(+) = H2O2 + NAD(+). Catalyzes the oxidation of the 1,2-dihydro- and 1,6-dihydro- isomeric forms of beta-NAD(P) back to beta-NAD(P)+. Has a preference for 1,2-dihydro-beta-NAD as substrate. May serve to protect primary metabolism dehydrogenases from inhibition by the 1,2-dihydro- and 1,6-dihydro-beta-NAD(P) isomers. The polypeptide is Renalase (Pseudomonas syringae pv. tomato (strain ATCC BAA-871 / DC3000)).